Here is a 197-residue protein sequence, read N- to C-terminus: ATP-dependent Clp protease proteolytic subunit 1 (197 aa).

Ser-96 acts as the Nucleophile in catalysis. His-121 is an active-site residue.

This sequence belongs to the peptidase S14 family. In terms of assembly, fourteen ClpP subunits assemble into 2 heptameric rings which stack back to back to give a disk-like structure with a central cavity, resembling the structure of eukaryotic proteasomes.

Its subcellular location is the cytoplasm. The enzyme catalyses Hydrolysis of proteins to small peptides in the presence of ATP and magnesium. alpha-casein is the usual test substrate. In the absence of ATP, only oligopeptides shorter than five residues are hydrolyzed (such as succinyl-Leu-Tyr-|-NHMec, and Leu-Tyr-Leu-|-Tyr-Trp, in which cleavage of the -Tyr-|-Leu- and -Tyr-|-Trp bonds also occurs).. Functionally, cleaves peptides in various proteins in a process that requires ATP hydrolysis. Has a chymotrypsin-like activity. Plays a major role in the degradation of misfolded proteins. In Synechococcus sp. (strain CC9902), this protein is ATP-dependent Clp protease proteolytic subunit 1.